Here is a 921-residue protein sequence, read N- to C-terminus: Protein translocase subunit SecA (921 aa).

ATP-binding positions include Gln86, 104–108 (GEGKT), and Asp512. The Zn(2+) site is built by Cys905, Cys907, Cys916, and His917.

The protein belongs to the SecA family. Monomer and homodimer. Part of the essential Sec protein translocation apparatus which comprises SecA, SecYEG and auxiliary proteins SecDF-YajC and YidC. Zn(2+) is required as a cofactor.

It localises to the cell inner membrane. The protein resides in the cytoplasm. The catalysed reaction is ATP + H2O + cellular proteinSide 1 = ADP + phosphate + cellular proteinSide 2.. Functionally, part of the Sec protein translocase complex. Interacts with the SecYEG preprotein conducting channel. Has a central role in coupling the hydrolysis of ATP to the transfer of proteins into and across the cell membrane, serving both as a receptor for the preprotein-SecB complex and as an ATP-driven molecular motor driving the stepwise translocation of polypeptide chains across the membrane. The polypeptide is Protein translocase subunit SecA (Caulobacter sp. (strain K31)).